A 258-amino-acid polypeptide reads, in one-letter code: UPF0758 protein Bcep1808_2579 (258 aa).

One can recognise an MPN domain in the interval 136–258 (PIDSPGAVED…TFSFARAGWL (123 aa)). 3 residues coordinate Zn(2+): His207, His209, and Asp220. Residues 207–220 (HNHPSGAVQPSAED) carry the JAMM motif motif.

This sequence belongs to the UPF0758 family.

The protein is UPF0758 protein Bcep1808_2579 of Burkholderia vietnamiensis (strain G4 / LMG 22486) (Burkholderia cepacia (strain R1808)).